Here is a 182-residue protein sequence, read N- to C-terminus: Putative pre-16S rRNA nuclease (182 aa).

The protein belongs to the YqgF nuclease family.

It is found in the cytoplasm. Could be a nuclease involved in processing of the 5'-end of pre-16S rRNA. The chain is Putative pre-16S rRNA nuclease from Corynebacterium aurimucosum (strain ATCC 700975 / DSM 44827 / CIP 107346 / CN-1) (Corynebacterium nigricans).